The sequence spans 304 residues: MNEQHAQSDRPPTVRPMDFLLVTGLSGAGLQTAAKVLEDLGWYVADNLPPELISRMVDLSLESDSRLERLAVVIDVRSRLFTGDLGWVLTELESKPVHTRVLYLDASDEVLVRRFEQVRRSHPLSGGGAEGTLSEGIAAERDQLAKVKAAADLVIDTSSLAAHQLRQKIEDAFGDAENRTMQVTVQSFGFKYGLPMDADLVCDVRFLPNPHWIPELRPHTGQSADVRDYVLSQDGAEDYLATYHHLLDLTITGYRREGKRYMTIAVGCTGGKHRSVAMSEALAGRLGKDSGLNVRVVHRDLGRE.

ATP is bound at residue 24–31; sequence GLSGAGLQ. 75-78 contributes to the GTP binding site; the sequence is DVRS.

It belongs to the RapZ-like family.

Displays ATPase and GTPase activities. The chain is Nucleotide-binding protein ROP_69550 from Rhodococcus opacus (strain B4).